The chain runs to 26 residues: DNA-binding transcriptional regulator NtrC (26 aa).

The Response regulatory domain occupies 4–26 (TILVADDDAAIRTVLNQALSRAG).

Phosphorylated and dephosphorylated by NtrB.

It is found in the cytoplasm. Member of the two-component regulatory system NtrB/NtrC, which controls expression of the nitrogen-regulated (ntr) genes in response to nitrogen limitation. Phosphorylated NtrC binds directly to DNA and stimulates the formation of open promoter-sigma54-RNA polymerase complexes. The protein is DNA-binding transcriptional regulator NtrC (ntrC) of Rhizobium leguminosarum bv. phaseoli.